The following is a 197-amino-acid chain: CASP-like protein 1B2 (197 aa).

An N-acetylalanine modification is found at A2. Topologically, residues 2–17 (AREKIVVAGGSTKSWK) are cytoplasmic. The helical transmembrane segment at 18–38 (LLLGLRVFAFMATLAAAIVMS) threads the bilayer. Residues 39 to 69 (LNKETKTLVVATIGTLPIKATLTAKFQDTPA) lie on the Extracellular side of the membrane. The chain crosses the membrane as a helical span at residues 70 to 90 (FVFFVIANVMVSFHNLLMIVL). Residues 91–106 (QIFSRKLEYKGVRLLS) lie on the Cytoplasmic side of the membrane. Residues 107–127 (IAILDMLNATLVSAAANAAVF) form a helical membrane-spanning segment. Over 128–156 (VAELGKNGNKHAKWNKVCDRFATYCDHGA) the chain is Extracellular. A helical transmembrane segment spans residues 157–177 (GALIAAFAGVILMLLVSSVSI). Over 178–197 (SRLLINSKHLSTTATTTAVV) the chain is Cytoplasmic.

Belongs to the Casparian strip membrane proteins (CASP) family. As to quaternary structure, homodimer and heterodimers.

The protein resides in the cell membrane. In Arabidopsis lyrata subsp. lyrata (Lyre-leaved rock-cress), this protein is CASP-like protein 1B2.